Reading from the N-terminus, the 349-residue chain is Micronemal protein 6 (349 aa).

The signal sequence occupies residues 1-23; sequence MRLFRCCAAAVVAAESLLWLKNG. 3 consecutive EGF-like domains span residues 36-80, 96-134, and 147-192; these read IADN…VTCM, TPAA…SLDG, and GCEE…ITCK. 9 disulfide bridges follow: Cys40/Cys53, Cys45/Cys62, Cys64/Cys79, Cys100/Cys113, Cys105/Cys122, Cys124/Cys140, Cys148/Cys162, Cys153/Cys173, and Cys175/Cys191. The tract at residues 194-291 is disordered; it reads VPPHYRKPPF…EEGSGHAGAI (98 aa). The segment at 204–283 is acidic domain; the sequence is EFGKGGHPVD…SEEQGKEREE (80 aa). Composition is skewed to basic and acidic residues over residues 210–247 and 276–285; these read HPVD…RTPL and EQGKEREEGS. The chain crosses the membrane as a helical span at residues 290–310; sequence AIAGGVIGGLLLLSAAGAGVA.

Interacts directly with MIC1. Part of the MIC6-MIC1-MIC4 complex. Subject to proteolytic processing involving both the N-terminus and the C-terminus. The first EGF-like domain (EGF-like domain 1) is removed by proteolytic cleavage by ASP3 and is not present in the mature protein. Released as soluble 35 kDa protein after proteolytic processing at the C-terminus.

The protein resides in the cytoplasmic vesicle. It is found in the secretory vesicle. Its subcellular location is the microneme membrane. The protein localises to the secreted. Functionally, escorter protein required for import of MIC1 and MIC4 adhesins into the microneme. In Toxoplasma gondii, this protein is Micronemal protein 6.